The sequence spans 492 residues: MDFWLYKQAQQNGHHIAITDGQESYTYQNLYCEASLLAKRLKAYQQSRVGLYIDNSIQSIILIHACWLANIEIAMINTRLTPNEMTNQMKSIDVQLIFCTLPLELRGFQIVSLDDIEFAGRDITTNSLLDNTMGIQYETSNETVVPKESPSNILNTSFNLDDIASIMFTSGTTGPQKAVPQTFRNHYASAIGCKESLGFDRDTNWLSVLPIYHISGLSVLLRAVIEGFTVRIVDKFNAEQILTMIKNERITHISLVPQTLNWLMQQGLHEPYNLQKILLGGAKLSATMIETALQYNLPIYNSFGMTETCSQFLTATPEMLHARPDTVGMPSANVDVKIKNPNKEGHGELMIKGANVMNVYLYPTDLTGTFENGYFNTGDIAEIDHEGYVMIYDRRKDLIISGGENIYPYQIETVAKQFPGISDAVCVGHPDDTWGQVPKLYFVSESDISKAQLIAYLSQHLAKYKVPKHFEKVDTLPYTSTGKLQRNKLYRG.

Belongs to the ATP-dependent AMP-binding enzyme family. MenE subfamily.

It carries out the reaction 2-succinylbenzoate + ATP + CoA = 2-succinylbenzoyl-CoA + AMP + diphosphate. It participates in quinol/quinone metabolism; 1,4-dihydroxy-2-naphthoate biosynthesis; 1,4-dihydroxy-2-naphthoate from chorismate: step 5/7. It functions in the pathway quinol/quinone metabolism; menaquinone biosynthesis. Its function is as follows. Converts 2-succinylbenzoate (OSB) to 2-succinylbenzoyl-CoA (OSB-CoA). The chain is 2-succinylbenzoate--CoA ligase from Staphylococcus aureus (strain USA300 / TCH1516).